Here is a 162-residue protein sequence, read N- to C-terminus: Small ribosomal subunit protein uS12m (162 aa).

A mitochondrion-targeting transit peptide spans 1 to 37 (MIRFAQYARYPVISRLMKPTVISPFQAQAFSSSSVML).

This sequence belongs to the universal ribosomal protein uS12 family. As to quaternary structure, component of the mitochondrial small ribosomal subunit (mt-SSU). Mature yeast 74S mitochondrial ribosomes consist of a small (37S) and a large (54S) subunit. The 37S small subunit contains a 15S ribosomal RNA (15S mt-rRNA) and at least 32 different proteins. The 54S large subunit contains a 21S rRNA (21S mt-rRNA) and at least 45 different proteins. uS12m forms part of the decoding center of the mt-SSU.

Its subcellular location is the mitochondrion. Its function is as follows. Component of the mitochondrial ribosome (mitoribosome), a dedicated translation machinery responsible for the synthesis of mitochondrial genome-encoded proteins, including at least some of the essential transmembrane subunits of the mitochondrial respiratory chain. The mitoribosomes are attached to the mitochondrial inner membrane and translation products are cotranslationally integrated into the membrane. uS12m is required for respiratory growth. This chain is Small ribosomal subunit protein uS12m, found in Schizosaccharomyces pombe (strain 972 / ATCC 24843) (Fission yeast).